We begin with the raw amino-acid sequence, 115 residues long: WMMIVEQKCRVIVMLAKCFEAGKKKCQKYWPDSEETKTFGRVKVFNAEEVKYCGFLRRRFHIESFDEMMSVEVFQYQYINWPDHSVPNTTSNLVRMHKYVIQCLEEIGGDAPMVV.

One can recognise a Tyrosine-protein phosphatase domain in the interval tryptophan 1–valine 115. Aspartate 83 serves as a coordination point for substrate.

The protein belongs to the protein-tyrosine phosphatase family.

It carries out the reaction O-phospho-L-tyrosyl-[protein] + H2O = L-tyrosyl-[protein] + phosphate. In Styela plicata (Wrinkled sea squirt), this protein is Tyrosine-protein phosphatase 23 (STY-23).